Reading from the N-terminus, the 529-residue chain is Cytochrome P450 monooxygenase ausG (529 aa).

Residues leucine 31–leucine 51 form a helical membrane-spanning segment. A heme-binding site is contributed by cysteine 470.

The protein belongs to the cytochrome P450 family. It depends on heme as a cofactor.

The protein localises to the membrane. Its pathway is secondary metabolite biosynthesis; terpenoid biosynthesis. In terms of biological role, cytochrome P450 monooxygenase; part of the gene cluster that mediates the biosynthesis of calidodehydroaustin, a fungal meroterpenoid. The first step of the pathway is the synthesis of 3,5-dimethylorsellinic acid by the polyketide synthase ausA. 3,5-dimethylorsellinic acid is then prenylated by the polyprenyl transferase ausN. Further epoxidation by the FAD-dependent monooxygenase ausM and cyclization by the probable terpene cyclase ausL lead to the formation of protoaustinoid A. Protoaustinoid A is then oxidized to spiro-lactone preaustinoid A3 by the combined action of the FAD-binding monooxygenases ausB and ausC, and the dioxygenase ausE. Acid-catalyzed keto-rearrangement and ring contraction of the tetraketide portion of preaustinoid A3 by ausJ lead to the formation of preaustinoid A4. The aldo-keto reductase ausK, with the help of ausH, is involved in the next step by transforming preaustinoid A4 into isoaustinone which is in turn hydroxylated by the P450 monooxygenase ausI to form austinolide. The cytochrome P450 monooxygenase ausG modifies austinolide to austinol. Austinol is further acetylated to austin by the O-acetyltransferase ausP, which spontaneously changes to dehydroaustin. The cytochrome P450 monooxygenase ausR then converts dehydroaustin is into 7-dehydrodehydroaustin. The hydroxylation catalyzed by ausR permits the O-acetyltransferase ausQ to add an additional acetyl group to the molecule, leading to the formation of acetoxydehydroaustin. The short chain dehydrogenase ausT catalyzes the reduction of the double bond present between carbon atoms 1 and 2 to convert 7-dehydrodehydroaustin into 1,2-dihydro-7-hydroxydehydroaustin. AusQ catalyzes not only an acetylation reaction but also the addition of the PKS ausV diketide product to 1,2-dihydro-7-hydroxydehydroaustin, forming precalidodehydroaustin. Finally, the iron/alpha-ketoglutarate-dependent dioxygenase converts precalidodehydroaustin into calidodehydroaustin. This chain is Cytochrome P450 monooxygenase ausG, found in Aspergillus calidoustus.